A 378-amino-acid chain; its full sequence is 23S rRNA (uracil(747)-C(5))-methyltransferase RlmC (378 aa).

The [4Fe-4S] cluster site is built by cysteine 3, cysteine 11, cysteine 14, and cysteine 87. Residues glutamine 212, phenylalanine 241, glutamate 262, and asparagine 309 each contribute to the S-adenosyl-L-methionine site. Cysteine 336 acts as the Nucleophile in catalysis.

The protein belongs to the class I-like SAM-binding methyltransferase superfamily. RNA M5U methyltransferase family. RlmC subfamily.

It catalyses the reaction uridine(747) in 23S rRNA + S-adenosyl-L-methionine = 5-methyluridine(747) in 23S rRNA + S-adenosyl-L-homocysteine + H(+). Catalyzes the formation of 5-methyl-uridine at position 747 (m5U747) in 23S rRNA. The polypeptide is 23S rRNA (uracil(747)-C(5))-methyltransferase RlmC (Shewanella halifaxensis (strain HAW-EB4)).